We begin with the raw amino-acid sequence, 181 residues long: Adenine phosphoribosyltransferase (181 aa).

The protein belongs to the purine/pyrimidine phosphoribosyltransferase family. In terms of assembly, homodimer.

The protein localises to the cytoplasm. It catalyses the reaction AMP + diphosphate = 5-phospho-alpha-D-ribose 1-diphosphate + adenine. It functions in the pathway purine metabolism; AMP biosynthesis via salvage pathway; AMP from adenine: step 1/1. In terms of biological role, catalyzes a salvage reaction resulting in the formation of AMP, that is energically less costly than de novo synthesis. This is Adenine phosphoribosyltransferase from Vibrio cholerae serotype O1 (strain ATCC 39541 / Classical Ogawa 395 / O395).